Reading from the N-terminus, the 823-residue chain is Zygotic DNA replication licensing factor mcm6-A (823 aa).

A C4-type zinc finger spans residues 159–186 (CLDCQTLVRDVEQQFKYTQPSICRNPVC). The MCM domain maps to 347–554 (LYHNLCTSLF…TDYAIARRIV (208 aa)). 397-404 (GDPSTAKS) is a binding site for ATP. The Arginine finger motif lies at 529–532 (SRFD). Positions 663–710 (PDVNLDQDDEHEPEDETQEGTNGDAEVPNGVNGHVNGINGHSQESNAA) are disordered. Over residues 667–680 (LDQDDEHEPEDETQ) the composition is skewed to acidic residues. A compositionally biased stretch (low complexity) spans 691–703 (NGVNGHVNGINGH).

This sequence belongs to the MCM family. In terms of assembly, component of the mcm2-7 complex (RLF-M). The complex forms a toroidal hexameric ring with the proposed subunit order mcm2-mcm6-mcm4-mcm7-mcm3-mcm5 (By simililarity). Begins to associate with zmcm3, mcm4 and mcm7 into mcm complexes at the neurula stage. May replace mmcm6 in the complex that functions during licensing of DNA replication.

Its subcellular location is the nucleus. It carries out the reaction ATP + H2O = ADP + phosphate + H(+). Its function is as follows. Acts as a component of the mcm2-7 complex (mcm complex) which is the putative replicative helicase essential for 'once per cell cycle' DNA replication initiation and elongation in eukaryotic cells. The active ATPase sites in the mcm2-7 ring are formed through the interaction surfaces of two neighboring subunits such that a critical structure of a conserved arginine finger motif is provided in trans relative to the ATP-binding site of the Walker A box of the adjacent subunit. The six ATPase active sites, however, are likely to contribute differentially to the complex helicase activity. The existence of maternal and zygotic forms of mcm3 and mcm6 suggests that specific forms of mcm2-7 complexes may be used during different stages of development. May replace mmcm6 in the mcm2-7 complex. The polypeptide is Zygotic DNA replication licensing factor mcm6-A (zmcm6-a) (Xenopus laevis (African clawed frog)).